We begin with the raw amino-acid sequence, 539 residues long: Cytochrome P450 monooxygenase pvhE (539 aa).

A helical membrane pass occupies residues 15 to 31 (VAFCSLVILCILFKVLT). An N-linked (GlcNAc...) asparagine glycan is attached at asparagine 379. A heme-binding site is contributed by cysteine 473.

This sequence belongs to the cytochrome P450 family. Heme serves as cofactor.

It is found in the membrane. It participates in secondary metabolite biosynthesis. Functionally, cytochrome P450 monooxygenase; part of the gene cluster that mediates the biosynthesis of varicidin A, an antifungal natural product containing a cis-octahydrodecalin core. The PKS module of pvhA together with the enoylreductase pvhC catalyze the formation of the polyketide unit which is then conjugated to L-isoleucine by the condensation domain of the NRPS module. Activity of the Dieckmann cyclase domain (RED) of pvhA results in release of an acyclic tetramate. The cytochrome P450 monooxygenase pvhE then catalyzes the oxidation of the C21 methyl group to a to carboxylate group. The methyltransferase pvhD then further methylates the pvhE product. The Diels-Alderase pvhB is able to catalyze Diels-Alder cycloaddition using both pvhE and pvhD products as substrates to form the decalin ring, yielding varicidin B and A, respectively. This chain is Cytochrome P450 monooxygenase pvhE, found in Talaromyces variabilis (Penicillium variabile).